An 899-amino-acid chain; its full sequence is AP-3 complex subunit delta (899 aa).

HEAT repeat units follow at residues 37-74 (QSPE…KLTY), 155-192 (ELAR…QYPE), 194-229 (LRDN…HNPQ), 231-267 (FIQL…IEPK), 268-305 (LRVK…LNSD), 308-344 (DSAV…KINT), 345-382 (DFIA…EDNL), 384-428 (DFVQ…ITAM), 480-518 (RTLA…LLDN), 536-580 (ELQQ…LIIS), 590-613 (SEAL…SLPL), and 614-656 (LLTE…TESE). Disordered stretches follow at residues 668-701 (DGIV…PTHE), 741-768 (NLSN…KKKK), 782-801 (GVNT…SARN), and 849-899 (AAEE…LTTE). Over residues 743–759 (SNSKPSSSGSLVRLSSE) the composition is skewed to low complexity. Residues 841 to 862 (QRLLDESAAAEEEVVVVKKKKR) adopt a coiled-coil conformation. Residues 857 to 880 (VKKKKRSKDGSKSSKKKSRSKSKP) are compositionally biased toward basic residues.

This sequence belongs to the adaptor complexes large subunit family. As to quaternary structure, adaptor protein complex 3 (AP-3) is a heterotetramer composed of 2 large adaptins (APL5 and APL6), a medium adaptin (APM3) and a small adaptin (APS3).

The protein resides in the golgi apparatus. It localises to the cytoplasmic vesicle. The protein localises to the clathrin-coated vesicle membrane. Its function is as follows. Part of the AP-3 complex, an adaptor-related complex which is not clathrin-associated. The complex is associated with the Golgi region as well as more peripheral structures. It facilitates the budding of vesicles from the Golgi membrane and may be directly involved in trafficking to the vacuole. The polypeptide is AP-3 complex subunit delta (APL5) (Eremothecium gossypii (strain ATCC 10895 / CBS 109.51 / FGSC 9923 / NRRL Y-1056) (Yeast)).